Here is a 73-residue protein sequence, read N- to C-terminus: MNPAAFLISLPIRFYRLVISPMIASNCRYTPTCSSYAMEALRKHGAIKGTWLAARRVSRCHPWGGSGIDNVPD.

Belongs to the UPF0161 family.

It is found in the cell inner membrane. Could be involved in insertion of integral membrane proteins into the membrane. In Jannaschia sp. (strain CCS1), this protein is Putative membrane protein insertion efficiency factor.